The sequence spans 875 residues: Serine/threonine-protein kinase D2 (875 aa).

A compositionally biased stretch (low complexity) spans 1–12; that stretch reads MAAAPSHPAGLP. Residues 1 to 35 form a disordered region; the sequence is MAAAPSHPAGLPGSPGPGSPPPPGGLDLQSPPPLL. A compositionally biased stretch (pro residues) spans 14-35; the sequence is SPGPGSPPPPGGLDLQSPPPLL. Ser-30 bears the Phosphoserine mark. Phosphotyrosine is present on Tyr-87. The Phorbol-ester/DAG-type 1 zinc-finger motif lies at 138-188; that stretch reads PHALTVHSYRAPAFCDHCGEMLFGLVRQGLKCDGCGLNYHKRCAFSIPNNC. Phosphoserine is present on residues Ser-197, Ser-198, Ser-200, Ser-203, Ser-206, Ser-211, Ser-212, and Ser-214. Residues 224-247 are disordered; sequence RSTTDLLPRRPPSSSSSSSSSSFY. A compositionally biased stretch (low complexity) spans 236–245; it reads SSSSSSSSSS. Position 244 is a phosphoserine; by CSNK1D and CSNK1E (Ser-244). Ser-245 carries the post-translational modification Phosphoserine. The Phorbol-ester/DAG-type 2 zinc finger occupies 265 to 315; sequence PHTFLIHSYTRPTVCQACKKLLKGLFRQGLQCKDCKFNCHKRCATRVPNDC. The interval 332 to 374 is disordered; the sequence is DYSEADKSSISDELEDSGVIPGSHSESALHASEEEEGEGHKAQ. The 113-residue stretch at 398-510 folds into the PH domain; the sequence is TTLREGWVVH…WETAIRQALM (113 aa). Position 408 is a phosphotyrosine (Tyr-408). Position 439 is a phosphotyrosine; by ABL1 (Tyr-439). Ser-519 is modified (phosphoserine). The Protein kinase domain occupies 552–808; the sequence is IFPDEVLGSG…VDKSLSHPWL (257 aa). ATP is bound by residues 558–566 and Lys-581; that span reads LGSGQFGVV. Asp-675 acts as the Proton acceptor in catalysis. Ser-707 is subject to Phosphoserine; by PKC. At Ser-711 the chain carries Phosphoserine; by autocatalysis. Tyr-718 is subject to Phosphotyrosine; by ABL1. The Important for ABL1-mediated Tyr-718 phosphorylation signature appears at 725-727; the sequence is LNQ. Ser-873 bears the Phosphoserine; by autocatalysis mark.

It belongs to the protein kinase superfamily. CAMK Ser/Thr protein kinase family. PKD subfamily. Interacts (via C-terminus) with LCK. Interacts (via N-terminus and zing-finger domain 1 and 2) with PRKCD in response to oxidative stress; the interaction is independent of PRKD2 tyrosine phosphorylation. Mg(2+) is required as a cofactor. In terms of processing, phosphorylation of Ser-873 correlates with the activation status of the kinase. Ser-707 is probably phosphorylated by PKC. Phosphorylation at Ser-244 by CSNK1D and CSNK1E promotes nuclear localization and substrate targeting. Phosphorylation at Ser-244, Ser-707 and Ser-711 is required for nuclear localization. Phosphorylated at Tyr-438 by ABL1 in response to oxidative stress. Phosphorylated at Tyr-718 by ABL1 specifically in response to oxidative stress; requires prior phosphorylation at Ser-707 or/and Ser-711.

Its subcellular location is the cytoplasm. It localises to the cell membrane. It is found in the golgi apparatus. The protein resides in the trans-Golgi network. It carries out the reaction L-seryl-[protein] + ATP = O-phospho-L-seryl-[protein] + ADP + H(+). It catalyses the reaction L-threonyl-[protein] + ATP = O-phospho-L-threonyl-[protein] + ADP + H(+). Its activity is regulated as follows. Activated by DAG and phorbol esters. Phorbol-ester/DAG-type domains bind DAG, mediating translocation to membranes. Autophosphorylation of Ser-711 and phosphorylation of Ser-707 by PKC relieves auto-inhibition by the PH domain. Catalytic activity is further increased by phosphorylation at Tyr-718 in response to oxidative stress. Serine/threonine-protein kinase that converts transient diacylglycerol (DAG) signals into prolonged physiological effects downstream of PKC, and is involved in the regulation of cell proliferation via MAPK1/3 (ERK1/2) signaling, oxidative stress-induced NF-kappa-B activation, inhibition of HDAC7 transcriptional repression, signaling downstream of T-cell antigen receptor (TCR) and cytokine production, and plays a role in Golgi membrane trafficking, angiogenesis, secretory granule release and cell adhesion. May potentiate mitogenesis induced by the neuropeptide bombesin by mediating an increase in the duration of MAPK1/3 (ERK1/2) signaling, which leads to accumulation of immediate-early gene products including FOS that stimulate cell cycle progression. In response to oxidative stress, is phosphorylated at Tyr-438 and Tyr-718 by ABL1, which leads to the activation of PRKD2 without increasing its catalytic activity, and mediates activation of NF-kappa-B. In response to the activation of the gastrin receptor CCKBR, is phosphorylated at Ser-244 by CSNK1D and CSNK1E, translocates to the nucleus, phosphorylates HDAC7, leading to nuclear export of HDAC7 and inhibition of HDAC7 transcriptional repression of NR4A1/NUR77. Upon TCR stimulation, is activated independently of ZAP70, translocates from the cytoplasm to the nucleus and is required for interleukin-2 (IL2) promoter up-regulation. During adaptive immune responses, is required in peripheral T-lymphocytes for the production of the effector cytokines IL2 and IFNG after TCR engagement and for optimal induction of antibody responses to antigens. In epithelial cells stimulated with lysophosphatidic acid (LPA), is activated through a PKC-dependent pathway and mediates LPA-stimulated interleukin-8 (IL8) secretion via a NF-kappa-B-dependent pathway. During TCR-induced T-cell activation, interacts with and is activated by the tyrosine kinase LCK, which results in the activation of the NFAT transcription factors. In the trans-Golgi network (TGN), regulates the fission of transport vesicles that are on their way to the plasma membrane and in polarized cells is involved in the transport of proteins from the TGN to the basolateral membrane. Plays an important role in endothelial cell proliferation and migration prior to angiogenesis, partly through modulation of the expression of KDR/VEGFR2 and FGFR1, two key growth factor receptors involved in angiogenesis. In secretory pathway, is required for the release of chromogranin-A (CHGA)-containing secretory granules from the TGN. Downstream of PRKCA, plays important roles in angiotensin-2-induced monocyte adhesion to endothelial cells. The protein is Serine/threonine-protein kinase D2 (Prkd2) of Mus musculus (Mouse).